The following is a 323-amino-acid chain: Voltage-dependent calcium channel gamma-2 subunit (323 aa).

The helical transmembrane segment at 10–30 threads the bilayer; it reads MLLTTVGAFAAFSLMTIAVGT. The N-linked (GlcNAc...) asparagine glycan is linked to Asn48. The next 3 membrane-spanning stretches (helical) occupy residues 104–124, 134–154, and 182–202; these read SSIF…CIAA, IILS…IGII, and FGAL…HMFI. Residues 233 to 261 are disordered; that stretch reads YQRRSRSSSRSTEPSHSRDASPVGIKGFN. A Phosphoserine modification is found at Ser253. Tyr271 bears the Phosphotyrosine mark. Thr321 is modified (phosphothreonine).

The protein belongs to the PMP-22/EMP/MP20 family. CACNG subfamily. The L-type calcium channel is composed of five subunits: alpha-1, alpha-2/delta, beta and gamma. Interacts with the PDZ domains of DLG4/PSD-95 and DLG1/SAP97. May interact with GOPC. Acts as an auxiliary subunit for AMPA-selective glutamate receptors (AMPARs). Found in a complex with GRIA1, GRIA2, GRIA3, GRIA4, CNIH2, CNIH3, CACNG3, CACNG4, CACNG5, CACNG7 and CACNG8. Interacts with GRIA1 and GRIA2. Interacts with MPP2. In terms of processing, phosphorylation of Thr-321 impairs interaction with DLG1 and DLG4. In terms of tissue distribution, brain.

It is found in the membrane. It localises to the synapse. Its subcellular location is the synaptosome. Its function is as follows. Regulates the trafficking and gating properties of AMPA-selective glutamate receptors (AMPARs). Promotes their targeting to the cell membrane and synapses and modulates their gating properties by slowing their rates of activation, deactivation and desensitization. Does not show subunit-specific AMPA receptor regulation and regulates all AMPAR subunits. Thought to stabilize the calcium channel in an inactivated (closed) state. The polypeptide is Voltage-dependent calcium channel gamma-2 subunit (CACNG2) (Homo sapiens (Human)).